A 1500-amino-acid chain; its full sequence is Carbamoyl-phosphate synthase [ammonia], mitochondrial (1500 aa).

Residues Met1–Leu38 constitute a mitochondrion transit peptide. An anthranilate phosphoribosyltransferase homolog region spans residues Leu39–Thr218. N6-acetyllysine; alternate occurs at positions 44, 55, 57, and 119. N6-succinyllysine; alternate occurs at positions 44, 55, 57, and 119. Residue Lys55 is modified to N6-glutaryllysine; alternate. Position 148 is a phosphoserine (Ser148). 2 positions are modified to N6-acetyllysine; alternate: Lys157 and Lys171. An N6-succinyllysine; alternate modification is found at Lys157. Residue Lys171 is modified to N6-glutaryllysine; alternate. Lys176 bears the N6-glutaryllysine mark. Lys182 bears the N6-acetyllysine mark. Residue Ser189 is modified to Phosphoserine. N6-acetyllysine is present on Lys197. 5 positions are modified to N6-acetyllysine; alternate: Lys207, Lys210, Lys214, Lys219, and Lys228. N6-succinyllysine; alternate is present on Lys207. 5 positions are modified to N6-glutaryllysine; alternate: Lys207, Lys210, Lys214, Lys219, and Lys228. An N6-succinyllysine; alternate modification is found at Lys214. Positions Lys219–Thr404 constitute a Glutamine amidotransferase type-1 domain. The residue at position 237 (Lys237) is an N6-glutaryllysine. Lys279 is modified (N6-acetyllysine). Residues Lys280, Lys287, Lys307, and Lys310 each carry the N6-acetyllysine; alternate modification. Position 280 is an N6-glutaryllysine; alternate (Lys280). N6-succinyllysine; alternate occurs at positions 287 and 307. Residues Lys307 and Lys310 each carry the N6-glutaryllysine; alternate modification. An N6-succinyllysine modification is found at Lys400. 2 positions are modified to N6-succinyllysine; alternate: Lys402 and Lys412. 4 positions are modified to N6-glutaryllysine; alternate: Lys402, Lys412, Lys453, and Lys458. N6-acetyllysine; alternate occurs at positions 412, 453, 458, 522, 527, and 532. Residues Lys458, Lys522, and Lys527 each carry the N6-succinyllysine; alternate modification. Residues Lys527 and Lys532 each carry the N6-glutaryllysine; alternate modification. At Ser537 the chain carries Phosphoserine; alternate. O-linked (GlcNAc) serine; alternate glycosylation occurs at Ser537. At Ser540 the chain carries Phosphoserine. The ATP-grasp 1 domain occupies Ser551–Leu743. Residues Lys553 and Lys560 each carry the N6-acetyllysine; alternate modification. 2 positions are modified to N6-succinyllysine; alternate: Lys553 and Lys560. Position 553 is an N6-glutaryllysine; alternate (Lys553). Ser569 carries the phosphoserine modification. Residues Lys575, Lys603, and Lys612 each carry the N6-acetyllysine; alternate modification. Lys575, Lys603, and Lys612 each carry N6-succinyllysine; alternate. Position 630 is an N6-acetyllysine (Lys630). Lys728 is modified (N6-glutaryllysine). An N6-acetyllysine; alternate mark is found at Lys751, Lys757, Lys772, Lys793, Lys811, Lys831, Lys840, Lys841, Lys856, Lys875, Lys889, and Lys892. 2 positions are modified to N6-succinyllysine; alternate: Lys751 and Lys757. N6-glutaryllysine; alternate is present on residues Lys757, Lys772, Lys793, and Lys811. The residue at position 793 (Lys793) is an N6-succinyllysine; alternate. Residues Lys831 and Lys840 each carry the N6-succinyllysine; alternate modification. 5 positions are modified to N6-glutaryllysine; alternate: Lys841, Lys856, Lys875, Lys889, and Lys892. N6-succinyllysine; alternate occurs at positions 875, 889, and 892. Residues Ser896 and Ser898 each carry the phosphoserine modification. 3 positions are modified to N6-acetyllysine; alternate: Lys908, Lys915, and Lys919. N6-glutaryllysine; alternate occurs at positions 908, 915, and 919. 2 positions are modified to N6-succinyllysine; alternate: Lys915 and Lys919. An N6-acetyllysine modification is found at Lys935. Ser1036 bears the Phosphoserine mark. Lys1074 bears the N6-acetyllysine; alternate mark. The residue at position 1074 (Lys1074) is an N6-succinyllysine; alternate. N6-glutaryllysine; alternate is present on Lys1074. 3 positions are modified to phosphoserine: Ser1079, Ser1090, and Ser1093. Residues Ser1093 to Ile1284 form the ATP-grasp 2 domain. Lys1100 is modified (N6-acetyllysine; alternate). N6-succinyllysine; alternate is present on Lys1100. Lys1149 carries the post-translational modification N6-succinyllysine. N6-acetyllysine; alternate occurs at positions 1168 and 1183. An N6-succinyllysine; alternate mark is found at Lys1168 and Lys1183. Lys1168 and Lys1183 each carry N6-glutaryllysine; alternate. The residue at position 1203 (Ser1203) is a Phosphoserine. An N6-acetyllysine modification is found at Lys1222. Residue Lys1224 is modified to N6-glutaryllysine. An N6-acetyllysine; alternate mark is found at Lys1232, Lys1269, and Lys1291. An N6-succinyllysine; alternate mark is found at Lys1232, Lys1269, and Lys1291. Ser1331 carries O-linked (GlcNAc) serine glycosylation. A glycan (O-linked (GlcNAc) threonine) is linked at Thr1332. Residues Phe1355–Ala1500 form the MGS-like domain. Lys1356 carries the post-translational modification N6-acetyllysine; alternate. Residues Lys1356 and Lys1360 each carry the N6-succinyllysine; alternate modification. 2 positions are modified to N6-glutaryllysine; alternate: Lys1356 and Lys1360. The N-acetyl-L-glutamate site is built by Thr1391, Thr1394, and Trp1410. 2 positions are modified to phosphoserine: Ser1419 and Ser1431. The N-acetyl-L-glutamate site is built by Asn1437 and Asn1440. N6-acetyllysine; alternate is present on Lys1444. Position 1444 is an N6-succinyllysine; alternate (Lys1444). Residue Asn1449 coordinates N-acetyl-L-glutamate. N6-acetyllysine; alternate occurs at positions 1471, 1479, and 1486. Lys1471, Lys1479, and Lys1486 each carry N6-succinyllysine; alternate. 2 positions are modified to N6-glutaryllysine; alternate: Lys1479 and Lys1486.

Can form homooligomers (monomers as predominant form and dimers). As to quaternary structure, (Microbial infection) Interacts with P.berghei (ANKA strain) phospholipid scramblase PLSCR; the interaction is involved in the interaction between parasite sporozoites and host hepatocytes. Undergoes proteolytic cleavage in the C-terminal region corresponding to the loss of approximately 12 AA residues from the C-terminus. Post-translationally, acetylation of Lys-287, Lys-603, Lys-841 and Lys-1291 is observed in liver mitochondria from fasted mice but not from fed mice. In terms of processing, succinylated at Lys-44, Lys-287 and Lys-1291. Desuccinylated at Lys-1291 by SIRT5, leading to activation. Glutarylated. Glutarylation levels increase during fasting. Deglutarylated by SIRT5 at Lys-55, Lys-219, Lys-412, Lys-889, Lys-892, Lys-915, Lys-1360 and Lys-1486, leading to activation. In terms of tissue distribution, expressed in hepatocytes (at protein level).

The protein localises to the mitochondrion. Its subcellular location is the nucleus. It localises to the nucleolus. The protein resides in the cell membrane. The enzyme catalyses hydrogencarbonate + NH4(+) + 2 ATP = carbamoyl phosphate + 2 ADP + phosphate + 2 H(+). With respect to regulation, requires N-acetyl-L-glutamate (NAG) as an allosteric activator. Functionally, involved in the urea cycle of ureotelic animals where the enzyme plays an important role in removing excess ammonia from the cell. The sequence is that of Carbamoyl-phosphate synthase [ammonia], mitochondrial (Cps1) from Mus musculus (Mouse).